A 359-amino-acid chain; its full sequence is Phosphoserine aminotransferase (359 aa).

L-glutamate-binding residues include Ser9 and Arg42. Residues 76 to 77, Trp102, Thr152, Asp171, and Gln194 each bind pyridoxal 5'-phosphate; that span reads AS. Position 195 is an N6-(pyridoxal phosphate)lysine (Lys195). 236-237 contributes to the pyridoxal 5'-phosphate binding site; it reads NT.

Belongs to the class-V pyridoxal-phosphate-dependent aminotransferase family. SerC subfamily. In terms of assembly, homodimer. It depends on pyridoxal 5'-phosphate as a cofactor.

It localises to the cytoplasm. It carries out the reaction O-phospho-L-serine + 2-oxoglutarate = 3-phosphooxypyruvate + L-glutamate. It catalyses the reaction 4-(phosphooxy)-L-threonine + 2-oxoglutarate = (R)-3-hydroxy-2-oxo-4-phosphooxybutanoate + L-glutamate. It functions in the pathway amino-acid biosynthesis; L-serine biosynthesis; L-serine from 3-phospho-D-glycerate: step 2/3. It participates in cofactor biosynthesis; pyridoxine 5'-phosphate biosynthesis; pyridoxine 5'-phosphate from D-erythrose 4-phosphate: step 3/5. Catalyzes the reversible conversion of 3-phosphohydroxypyruvate to phosphoserine and of 3-hydroxy-2-oxo-4-phosphonooxybutanoate to phosphohydroxythreonine. This is Phosphoserine aminotransferase from Marinomonas sp. (strain MWYL1).